A 552-amino-acid polypeptide reads, in one-letter code: Acyl-CoA-dependent acyltransferase MAC1 (552 aa).

Belongs to the trichothecene O-acetyltransferase family.

It participates in secondary metabolite biosynthesis. Acyl-CoA-dependent acyltransferase; part of the gene cluster that mediates the biosynthesis of mannosylerythritol lipids (MELs), surface-active substances that enhance the availability of water-insoluble substrates. Depending on the number of acetyl groups, mannosylerythritol lipids can be differentiated into MEL A (fully acetylated), MEL B and MEL C (monoacetylated at R-6 and R-4, respectively), and the fully deacetylated MEL D. The first step in the pathway is the generation of mannosylerythritol by the glycosyltransferase EMT1 which catalyzes the transfer of GDP-mannose to the C-4 atom of meso-erythritol. This reaction has to be stereospecific, since only mannosyl-D-erythritol is generated. The produced disaccharide is subsequently acylated with fatty acids of various lengths by the acyltransferases MAC1 and MAC2 at positions C-2 and C-3, repectively. The existence of MEL derivatives which carry an acetyl group at C-2 implies that at least MAC1 also accepts acetyl-CoA as a donor. The final step of MEL biosynthesis is the acetylation of the fully acylated mannosylerythritol lipids catalyzed by the acetyl-CoA-dependent acetyltransferase MAT1. MAT1 displays a relaxed regioselectivity and is able to transfer acetylgroups to both positions C-4 and C-6 of the mannosyl moiety. In Pseudozyma antarctica (strain T-34) (Yeast), this protein is Acyl-CoA-dependent acyltransferase MAC1.